The following is a 124-amino-acid chain: Iron-sulfur cluster insertion protein ErpA (124 aa).

3 residues coordinate iron-sulfur cluster: C52, C116, and C118.

It belongs to the HesB/IscA family. As to quaternary structure, homodimer. The cofactor is iron-sulfur cluster.

In terms of biological role, required for insertion of 4Fe-4S clusters for at least IspG. The sequence is that of Iron-sulfur cluster insertion protein ErpA from Vibrio atlanticus (strain LGP32) (Vibrio splendidus (strain Mel32)).